A 319-amino-acid polypeptide reads, in one-letter code: Cytochrome c biogenesis protein CcsA (319 aa).

The next 5 helical transmembrane spans lie at Ala14–Trp34, Ala46–Phe66, Ser74–Gly94, Leu97–Leu117, and Val142–Val162. Positions Ser175–Val201 are disordered. Residues Glu191–Val201 are compositionally biased toward polar residues. 3 consecutive transmembrane segments (helical) span residues Met227 to Asn247, Trp254 to Leu274, and Ala288 to Leu308.

Belongs to the CcmF/CycK/Ccl1/NrfE/CcsA family. May interact with ccs1.

Its subcellular location is the cellular thylakoid membrane. Required during biogenesis of c-type cytochromes (cytochrome c6 and cytochrome f) at the step of heme attachment. This chain is Cytochrome c biogenesis protein CcsA, found in Thermosynechococcus vestitus (strain NIES-2133 / IAM M-273 / BP-1).